A 115-amino-acid polypeptide reads, in one-letter code: NADH-ubiquinone oxidoreductase chain 3 (115 aa).

3 helical membrane-spanning segments follow: residues 1 to 21, 55 to 75, and 87 to 107; these read MITL…LLII, FFLV…LFPL, and AIIL…YEWL.

It belongs to the complex I subunit 3 family.

It is found in the mitochondrion membrane. The enzyme catalyses a ubiquinone + NADH + 5 H(+)(in) = a ubiquinol + NAD(+) + 4 H(+)(out). Its function is as follows. Core subunit of the mitochondrial membrane respiratory chain NADH dehydrogenase (Complex I) that is believed to belong to the minimal assembly required for catalysis. Complex I functions in the transfer of electrons from NADH to the respiratory chain. The immediate electron acceptor for the enzyme is believed to be ubiquinone. The chain is NADH-ubiquinone oxidoreductase chain 3 (MT-ND3) from Myxine glutinosa (Atlantic hagfish).